Here is a 120-residue protein sequence, read N- to C-terminus: Seripauperin-4 (120 aa).

A helical transmembrane segment spans residues 7–24 (IAAGVAAIAATASATTTI).

This sequence belongs to the SRP1/TIP1 family. Seripauperin subfamily.

It is found in the membrane. The chain is Seripauperin-4 (PAU4) from Saccharomyces cerevisiae (strain ATCC 204508 / S288c) (Baker's yeast).